The sequence spans 1159 residues: Reverse gyrase 2 (1159 aa).

The RG N-terminal-type zinc finger occupies 1–40 (MALELIERGCPNCGGVISSDRLEKGLPCSKCLPKPTEEKV). The Zn(2+) site is built by Cys10, Cys13, Cys28, and Cys31. Residues Gln82 and 99-106 (APTGVGKT) contribute to the ATP site. Residues 86–275 (AKRVFMNQSF…LFRNLLGFDV (190 aa)) form the Helicase ATP-binding domain. A DEAD box motif is present at residues 196–199 (DDID). The tract at residues 583–1159 (DLFKTTLVIV…LLKEEKAFKK (577 aa)) is topoisomerase I. The 157-residue stretch at 587-743 (TTLVIVESPN…NIKRAEFHEV (157 aa)) folds into the Toprim domain. Residues Glu593 and Asp712 each coordinate Mg(2+). The Topo IA-type catalytic domain occupies 759–1152 (DLNLVKAQLV…EVHRIKVLLK (394 aa)). Catalysis depends on Tyr902, which acts as the O-(5'-phospho-DNA)-tyrosine intermediate.

The protein in the N-terminal section; belongs to the DEAD box helicase family. DDVD subfamily. This sequence in the C-terminal section; belongs to the type IA topoisomerase family. Monomer. Requires Zn(2+) as cofactor. It depends on Mg(2+) as a cofactor.

Its subcellular location is the cytoplasm. It carries out the reaction ATP + H2O = ADP + phosphate + H(+). Its function is as follows. Modifies the topological state of DNA by introducing positive supercoils in an ATP-dependent process, increasing the linking number in steps of +1. Binds to single-stranded DNA, transiently cleaves and then rejoins the ends, introducing a positive supercoil in the process. The scissile phosphodiester is attacked by the catalytic tyrosine of the enzyme, resulting in the formation of a DNA-(5'-phosphotyrosyl)-enzyme intermediate. Probably involved in rewinding DNA strands in regions of the chromosome that have opened up to allow replication, transcription, DNA repair and/or for DNA protection. This Aquifex aeolicus (strain VF5) protein is Reverse gyrase 2.